Here is a 137-residue protein sequence, read N- to C-terminus: 2-iminobutanoate/2-iminopropanoate deaminase (137 aa).

Ser-2 carries the N-acetylserine modification. Residues Lys-13 and Lys-67 each carry the N6-succinyllysine modification. Thr-74 is subject to Phosphothreonine. Ser-136 carries the post-translational modification Phosphoserine.

The protein belongs to the RutC family. Homotrimer. Interacts with YTHDF2.

The protein localises to the cytoplasm. Its subcellular location is the nucleus. It localises to the peroxisome. It is found in the mitochondrion. The enzyme catalyses 2-iminobutanoate + H2O = 2-oxobutanoate + NH4(+). It carries out the reaction 2-iminopropanoate + H2O = pyruvate + NH4(+). Catalyzes the hydrolytic deamination of enamine/imine intermediates that form during the course of normal metabolism. May facilitate the release of ammonia from these potentially toxic reactive metabolites, reducing their impact on cellular components. It may act on enamine/imine intermediates formed by several types of pyridoxal-5'-phosphate-dependent dehydratases including L-threonine dehydratase. Its function is as follows. Also promotes endoribonucleolytic cleavage of some transcripts by promoting recruitment of the ribonuclease P/MRP complex. Acts by bridging YTHDF2 and the ribonuclease P/MRP complex. RIDA/HRSP12 binds to N6-methyladenosine (m6A)-containing mRNAs containing a 5'-GGUUC-3' motif: cooperative binding of RIDA/HRSP12 and YTHDF2 to such transcripts lead to recruitment of the ribonuclease P/MRP complex and subsequent endoribonucleolytic cleavage. In Bos taurus (Bovine), this protein is 2-iminobutanoate/2-iminopropanoate deaminase.